Here is a 716-residue protein sequence, read N- to C-terminus: Forkhead box protein P2 (716 aa).

Residues 1-28 (MMQESATETISNSSMNQNGMSTLSSQLD) show a composition bias toward polar residues. Disordered regions lie at residues 1 to 45 (MMQE…SEVS) and 286 to 340 (KHGG…TGAS). The span at 293–306 (TTNNSSSTTSSTTS) shows a compositional bias: low complexity. Polar residues predominate over residues 316-325 (SIVNGQSSVL). A compositionally biased stretch (basic and acidic residues) spans 327–338 (ARRDSSSHEETG). The segment at 347–372 (GVCKWPGCESICEDFGQFLKHLNNEH) adopts a C2H2-type zinc-finger fold. Residues 389–410 (VQQLEIQLSKERERLQAMMTHL) are leucine-zipper. Residues 423 to 427 (PLNLV) are CTBP1-binding. Residues 439–460 (TSPQSLPQTPTTPTAPVTPITQ) show a composition bias toward low complexity. The interval 439–466 (TSPQSLPQTPTTPTAPVTPITQGPSVIT) is disordered. Residues 505–595 (RPPFTYATLI…SQKITGSPTL (91 aa)) constitute a DNA-binding region (fork-head). Disordered regions lie at residues 650–669 (LDHI…QPHI) and 679–716 (VIAE…EDLE). Positions 700–716 (LEDDREIEEEPLSEDLE) are enriched in acidic residues.

As to quaternary structure, forms homodimers and heterodimers with FOXP1 and FOXP4. Dimerization is required for DNA-binding. Interacts with CTBP1. Interacts with FOXP1. Interacts with TBR1. Interacts with ZMYM2.

The protein resides in the nucleus. Functionally, transcriptional repressor that may play a role in the specification and differentiation of lung epithelium. May also play a role in developing neural, gastrointestinal and cardiovascular tissues. Can act with CTBP1 to synergistically repress transcription but CTPBP1 is not essential. Plays a role in synapse formation by regulating SRPX2 levels. The polypeptide is Forkhead box protein P2 (FOXP2) (Pan paniscus (Pygmy chimpanzee)).